Here is an 853-residue protein sequence, read N- to C-terminus: Lysine-specific histone demethylase 1A (853 aa).

Residues 1 to 177 are disordered; sequence MLSGKKAAAA…EPEEPSGVEG (177 aa). The span at 7–26 shows a compositional bias: low complexity; it reads AAAAAAAAAAAAAAGTEAGS. Position 60 is a phosphothreonine (Thr60). A compositionally biased stretch (low complexity) spans 76–97; the sequence is AEPPGSAGPQAGPTAGPGSATP. Thr105 bears the Phosphothreonine mark. A coiled-coil region spans residues 111 to 152; the sequence is TSRRKRAKVEYREMDESLANLSEDEYYSEEERNAKAEKEKKL. 2 positions are modified to phosphoserine: Ser127 and Ser132. Tyr136 is modified (phosphotyrosine). Ser138 is modified (phosphoserine). A compositionally biased stretch (basic and acidic residues) spans 139–152; the sequence is EEERNAKAEKEKKL. The segment covering 161–173 has biased composition (acidic residues); the sequence is PEEENESEPEEPS. Ser167 is subject to Phosphoserine. An SWIRM domain is found at 175 to 274; the sequence is VEGAAFQSRL…FGIYKRIKPL (100 aa). FAD-binding positions include Ser290, Glu309, Arg311, Arg317, and 333 to 334; that span reads MV. The segment at 301–853 is demethylase activity; it reads FGMDVTLLEA…GVPAQQSPSM (553 aa). A coiled-coil region spans residues 429–515; that stretch reads IEHWKKIVKT…EEKLQELEAN (87 aa). N6-acetyllysine is present on residues Lys433, Lys434, and Lys437. Glycyl lysine isopeptide (Lys-Gly) (interchain with G-Cter in SUMO2) cross-links involve residues Lys443 and Lys470. Lys504 is covalently cross-linked (Glycyl lysine isopeptide (Lys-Gly) (interchain with G-Cter in ubiquitin)). Ser612 carries the phosphoserine modification. Residues Glu802 and 811–812 contribute to the FAD site; that span reads TV. The residue at position 850 (Ser850) is a Phosphoserine.

This sequence belongs to the flavin monoamine oxidase family. As to quaternary structure, component of a histone demethylase complex with RCOR1. Component of a BHC histone deacetylase complex that contains HDAC1, HDAC2, HMG20B, KDM1A, RCOR1 and PHF21A. The BHC complex may also contain ZMYM2, ZNF217, ZMYM3, GSE1 and GTF2I. In the complex, RCOR1 strongly enhances the demethylase activity and protects it from the proteasome while PHF21A inhibits the demethylase activity. Interacts with the androgen receptor (AR). Component of a RCOR/GFI/KDM1A/HDAC complex. Interacts directly with GFI1 and GFI1B. Interacts with SNAI1 (via SNAG domain). Interacts with INSM1. Interacts (via AOD/Tower domain) with JADE2 (via C-terminus). Interacts with ESRRB; co-occupes the core set of ESRRB targets. Interacts with SAMD1 (via WH domain); the interaction modulates KDM1A function. Interacts with RBPJ. Interacts with L3MBTL3. Interacts with ZMYND8. It depends on FAD as a cofactor. Post-translationally, acetylated by KAT8 in epithelial but not in mesenchymal cells, thereby regulating the epithelial-to-mesenchymal transition. Acetylation by KAT8 reduces KDM1A association with nucleosomes, thereby decreasing histone H3 demethylation, leading to transcription activatio of target genes. In terms of processing, polyubiquitinated by JADE2; which leads to its proteasomal degradation. Deubiquitinated by USP38; preventing it from degradation by the 26S proteasome. As to expression, ubiquitously expressed.

The protein localises to the nucleus. The protein resides in the chromosome. It catalyses the reaction N(6),N(6)-dimethyl-L-lysyl(4)-[histone H3] + 2 A + 2 H2O = L-lysyl(4)-[histone H3] + 2 formaldehyde + 2 AH2. With respect to regulation, the N-terminal sequences of INSM1 and SNAI1 compete with histone H3 for the same binding site and thereby inhibit histone demethylation (in vitro). Functionally, histone demethylase that can demethylate both 'Lys-4' (H3K4me) and 'Lys-9' (H3K9me) of histone H3, thereby acting as a coactivator or a corepressor, depending on the context. Acts by oxidizing the substrate by FAD to generate the corresponding imine that is subsequently hydrolyzed. Acts as a corepressor by mediating demethylation of H3K4me, a specific tag for epigenetic transcriptional activation. Demethylates both mono- (H3K4me1) and di-methylated (H3K4me2) H3K4me. May play a role in the repression of neuronal genes. Alone, it is unable to demethylate H3K4me on nucleosomes and requires the presence of RCOR1/CoREST to achieve such activity. Also acts as a coactivator of androgen receptor (ANDR)-dependent transcription, by being recruited to ANDR target genes and mediating demethylation of H3K9me, a specific tag for epigenetic transcriptional repression. The presence of PRKCB in ANDR-containing complexes, which mediates phosphorylation of 'Thr-6' of histone H3 (H3T6ph), a specific tag that prevents demethylation H3K4me, prevents H3K4me demethylase activity of KDM1A. Demethylates di-methylated 'Lys-370' of p53/TP53 which prevents interaction of p53/TP53 with TP53BP1 and represses p53/TP53-mediated transcriptional activation. Demethylates and stabilizes the DNA methylase DNMT1. Demethylates methylated 'Lys-44' and methylated 'Lys-119' of SOX2. Required for gastrulation during embryogenesis. Component of a RCOR/GFI/KDM1A/HDAC complex that suppresses, via histone deacetylase (HDAC) recruitment, a number of genes implicated in multilineage blood cell development. Facilitates epithelial-to-mesenchymal transition by acting as an effector of SNAI1-mediated transcription repression of epithelial markers E-cadherin/CDH1, CDN7 and KRT8. Required for the maintenance of the silenced state of the SNAI1 target genes E-cadherin/CDH1 and CDN7. Required for the repression of GIPR expression. The sequence is that of Lysine-specific histone demethylase 1A from Mus musculus (Mouse).